A 313-amino-acid chain; its full sequence is N-acetyl-gamma-glutamyl-phosphate reductase 2 (313 aa).

Cys-117 is a catalytic residue.

The protein belongs to the NAGSA dehydrogenase family. Type 2 subfamily.

Its subcellular location is the cytoplasm. It catalyses the reaction N-acetyl-L-glutamate 5-semialdehyde + phosphate + NADP(+) = N-acetyl-L-glutamyl 5-phosphate + NADPH + H(+). It functions in the pathway amino-acid biosynthesis; L-arginine biosynthesis; N(2)-acetyl-L-ornithine from L-glutamate: step 3/4. In terms of biological role, catalyzes the NADPH-dependent reduction of N-acetyl-5-glutamyl phosphate to yield N-acetyl-L-glutamate 5-semialdehyde. This Pseudomonas putida (strain ATCC 47054 / DSM 6125 / CFBP 8728 / NCIMB 11950 / KT2440) protein is N-acetyl-gamma-glutamyl-phosphate reductase 2.